The primary structure comprises 1224 residues: Tyrosine-protein kinase abl-1 (1224 aa).

An SH3 domain is found at 115–188 (SSAPLFVALY…PSNFIAPYNS (74 aa)). In terms of domain architecture, SH2 spans 194 to 284 (WYHGKISRSD…GLICLLMYPA (91 aa)). Residues 311–562 (IIMHNKLGGG…PRFRDIHFNL (252 aa)) form the Protein kinase domain. Residues 317 to 325 (LGGGQYGDV), K340, and 385 to 391 (EFMCNGN) contribute to the ATP site. The Proton acceptor role is filled by D432. The short motif at 450 to 474 (DFGLARFMKEDTYTAHAGAKFPIKW) is the Kinase activation loop element. Residues 579-620 (LKKNNDKKLESDKRRSNVRERSDSKSRHSSHHDRDRDRESLH) show a composition bias toward basic and acidic residues. 5 disordered regions span residues 579–671 (LKKN…NTKP), 736–775 (KEST…STYV), 796–881 (KRSE…DVGM), 914–937 (LRHV…ATDN), and 968–1016 (RPFS…RSNG). 2 stretches are compositionally biased toward polar residues: residues 639–655 (SVSF…TSFR) and 746–760 (AGSS…NDSL). 2 stretches are compositionally biased toward basic and acidic residues: residues 797-819 (RSET…KSEK) and 864-877 (PDSK…ETTK). Residues 973 to 984 (QCPNNSTSSAIS) show a composition bias toward polar residues. Basic and acidic residues predominate over residues 1001–1016 (YEERMKPELPRKRSNG).

The protein belongs to the protein kinase superfamily. Tyr protein kinase family. ABL subfamily. As to quaternary structure, interacts (via SH2 and SH3 domains) with mig-13; the interaction is direct. May interact with soem-1.

The protein resides in the cell membrane. Its subcellular location is the cytoplasm. It carries out the reaction L-tyrosyl-[protein] + ATP = O-phospho-L-tyrosyl-[protein] + ADP + H(+). Functionally, functions downstream of migratory protein mig-13 and is involved in Q neuroblast migration during larval development. Recruited by mig-13 to the leading edge of Q neuroblasts and their descendents to signal downstream, likely to the wve-1 pathway, and direct migration along the anteroposterior body axis. Promotes germline cell apoptosis in response to oxidative, osmotic and heat shock stresses. This is Tyrosine-protein kinase abl-1 (abl-1) from Caenorhabditis elegans.